The following is a 135-amino-acid chain: Large ribosomal subunit protein bL19 (135 aa).

Belongs to the bacterial ribosomal protein bL19 family.

In terms of biological role, this protein is located at the 30S-50S ribosomal subunit interface and may play a role in the structure and function of the aminoacyl-tRNA binding site. The sequence is that of Large ribosomal subunit protein bL19 from Protochlamydia amoebophila (strain UWE25).